Consider the following 2120-residue polypeptide: Separin (2120 aa).

Residue serine 1126 is modified to Phosphoserine. Positions 1299 to 1355 are disordered; the sequence is IKSVPGSEPSKTQGQKRSGRGRQKLASAPLRLNNTSQKGLEGRGLPCTPKPPDRIRQ. Serine 1396 and serine 1399 each carry phosphoserine. Disordered stretches follow at residues 1412–1485 and 1507–1561; these read AEEP…PEIM and GSDG…PRLR. Basic residues-rich tracts occupy residues 1418–1432 and 1454–1463; these read RGTASRGRGRARKGL and RSRRAKKVAS. Residues 1464–1473 are compositionally biased toward basic and acidic residues; it reads RHCEERRPQR. Position 1508 is a phosphoserine (serine 1508). Over residues 1548–1558 the composition is skewed to basic and acidic residues; it reads PDKESDKDLGP. Residues 1945-2040 form the Peptidase C50 domain; it reads PRSTFYVLNP…SAALAVRGNL (96 aa). Residue cysteine 2029 is part of the active site.

In terms of assembly, interacts with PTTG1. Interacts with RAD21. In terms of processing, autocleaves. This function, which is not essential for its protease activity, is unknown. Post-translationally, phosphorylated by CDK1. There are 8 Ser/Thr phosphorylation sites. Among them, Ser-1126 phosphorylation is the major site, which conducts to the enzyme inactivation.

The protein localises to the cytoplasm. It localises to the nucleus. The catalysed reaction is All bonds known to be hydrolyzed by this endopeptidase have arginine in P1 and an acidic residue in P4. P6 is often occupied by an acidic residue or by a hydroxy-amino-acid residue, the phosphorylation of which enhances cleavage.. Regulated by at least two independent mechanisms. First, it is inactivated via its interaction with securin/PTTG1, which probably covers its active site. The association with PTTG1 is not only inhibitory, since PTTG1 is also required for activating it, the enzyme being inactive in cells in which PTTG1 is absent. PTTG1 degradation at anaphase, liberates it and triggers RAD21 cleavage. Second, phosphorylation at Ser-1126 inactivates it. The complete phosphorylation during mitosis, is removed when cells undergo anaphase. Activation of the enzyme at the metaphase-anaphase transition probably requires the removal of both securin and inhibitory phosphate. Its function is as follows. Caspase-like protease, which plays a central role in the chromosome segregation by cleaving the SCC1/RAD21 subunit of the cohesin complex at the onset of anaphase. During most of the cell cycle, it is inactivated by different mechanisms. The chain is Separin (ESPL1) from Homo sapiens (Human).